The sequence spans 1196 residues: FIP1[V]-like protein (1196 aa).

Disordered regions lie at residues 1–102 (MEED…TIPG), 117–248 (GVSQ…SHGY), 268–300 (GAAS…WRPL), 413–472 (GAQG…PRMR), and 485–1174 (SHED…IEGP). Pro residues predominate over residues 18 to 31 (FQPPVVLPPPPPLP). Residues 117 to 126 (GVSQVTTRIE) are compositionally biased toward polar residues. A compositionally biased stretch (gly residues) spans 129–141 (VGGGGDGGYGGQG). Acidic residues-rich tracts occupy residues 142–154 (EGDD…EDDL) and 179–190 (NEDDDDEDDEDP). The segment covering 226–236 (AGKGSGPGGAT) has biased composition (gly residues). The segment covering 268–278 (GAASVGGPSSG) has biased composition (low complexity). The span at 518–548 (KRPDTESAEHSPAQDEPHKNLLKKQDDEISR) shows a compositional bias: basic and acidic residues. A compositionally biased stretch (polar residues) spans 549-561 (STDSGQSFRSSSP). Composition is skewed to basic and acidic residues over residues 565 to 592 (RGTR…EELK) and 608 to 641 (GESK…DKHS). The span at 643 to 657 (RPANNRKQYDNNAPH) shows a compositional bias: polar residues. Composition is skewed to basic and acidic residues over residues 661 to 673 (KNQD…ERTR), 699 to 802 (SRED…EKNE), 810 to 918 (SMSR…DTLR), 925 to 945 (RRDY…DFSA), and 953 to 971 (NEKK…KFID). 2 consecutive short sequence motifs (nuclear localization signal) follow at residues 704–711 (DKRKERDV) and 734–741 (RKRDREDD). Positions 998-1021 (ESLSKQGEQNGSSVVTGSKGTNDA) are enriched in polar residues. Basic and acidic residues-rich tracts occupy residues 1046–1071 (DEIH…EDAV), 1103–1137 (KSRD…TVEK), and 1151–1163 (TEKD…KMES).

The protein belongs to the FIP1 family. In terms of assembly, component of the cleavage and polyadenylation specificity factor (CPSF) complex. Forms a complex with cleavage and polyadenylation specificity factor (CPSF) subunits CFIS1, CFIS2, CPSF30, CSTF50, CSTF64, CSTF77, FIPS3, PABN1, PABN2, PABN3, PAPS4, CFIM25 and PABN1. Binds RNA. As to expression, expressed in leaves, stems, flower tissues and roots.

Its subcellular location is the nucleus. Essential gene. Component of the cleavage and polyadenylation specificity factor (CPSF) complex that plays a key role in pre-mRNA 3'-end formation, recognizing the AAUAAA signal sequence and interacting with poly(A) polymerase and other factors to bring about cleavage and poly(A) addition. FIP1L1 contributes to poly(A) site recognition and stimulates poly(A) addition. Binds to U-rich RNA sequence elements surrounding the poly(A) site. May act to tether poly(A) polymerase to the CPSF complex. The chain is FIP1[V]-like protein from Arabidopsis thaliana (Mouse-ear cress).